Here is a 172-residue protein sequence, read N- to C-terminus: Transcriptional repressor NrdR (172 aa).

A zinc finger spans residues 3–34; sequence CPFCGAPDTRVIDSRLAGEGDQVRRRRECLSC. The ATP-cone domain maps to 49–139; that stretch reads PRVVKRDGSR…VYLSFADVQA (91 aa).

This sequence belongs to the NrdR family. Zn(2+) serves as cofactor.

Functionally, negatively regulates transcription of bacterial ribonucleotide reductase nrd genes and operons by binding to NrdR-boxes. This is Transcriptional repressor NrdR from Thioalkalivibrio sulfidiphilus (strain HL-EbGR7).